A 428-amino-acid polypeptide reads, in one-letter code: MATSWGTVFFMLVVSCVCSAVSHRNQQTWFEGIFLSSMCPINVSASTLYGIMFDAGSTGTRIHVYTFVQKMPGQLPILEGEVFDSVKPGLSAFVDQPKQGAETVQGLLEVAKDSIPRSHWKKTPVVLKATAGLRLLPEHKAKALLFEVKEIFRKSPFLVPKGSVSIMDGSDEGILAWVTVNFLTGQLHGHRQETVGTLDLGGASTQITFLPQFEKTLEQTPRGYLTSFEMFNSTYKLYTHSYLGFGLKAARLATLGALETEGTDGHTFRSACLPRWLEAEWIFGGVKYQYGGNQEGEVGFEPCYAEVLRVVRGKLHQPEEVQRGSFYAFSYYYDRAVDTDMIDYEKGGILKVEDFERKAREVCDNLENFTSGSPFLCMDLSYITALLKDGFGFADSTVLQLTKKVNNIETGWALGATFHLLQSLGISH.

Positions 1-24 (MATSWGTVFFMLVVSCVCSAVSHR) are cleaved as a signal peptide. Glu-172 functions as the Proton acceptor in the catalytic mechanism. N-linked (GlcNAc...) asparagine glycosylation occurs at Asn-232. Disulfide bonds link Cys-272–Cys-303 and Cys-363–Cys-377. An N-linked (GlcNAc...) asparagine glycan is attached at Asn-368.

This sequence belongs to the GDA1/CD39 NTPase family. Monomer; active form. Homodimer; disulfide-linked. Homodimers are enzymatically inactive. It depends on Ca(2+) as a cofactor. Mg(2+) is required as a cofactor. N-glycosylated; high-mannose type. Glycosylation is not essential for enzymatic activity. In terms of tissue distribution, expressed in adult liver, kidney, prostate, testis and colon. Much weaker expression in other tissues.

Its subcellular location is the endoplasmic reticulum. The protein localises to the secreted. The catalysed reaction is a ribonucleoside 5'-diphosphate + H2O = a ribonucleoside 5'-phosphate + phosphate + H(+). The enzyme catalyses GDP + H2O = GMP + phosphate + H(+). It catalyses the reaction UDP + H2O = UMP + phosphate + H(+). It carries out the reaction IDP + H2O = IMP + phosphate + H(+). The catalysed reaction is CDP + H2O = CMP + phosphate + H(+). The enzyme catalyses ADP + H2O = AMP + phosphate + H(+). It functions in the pathway protein modification; protein glycosylation. Its function is as follows. Hydrolyzes nucleoside diphosphates with a preference for GDP, IDP and UDP compared to ADP and CDP. In the lumen of the endoplasmic reticulum, hydrolyzes UDP that acts as an end-product feedback inhibitor of the UDP-Glc:glycoprotein glucosyltransferases. UMP can be transported back by an UDP-sugar antiporter to the cytosol where it is consumed to regenerate UDP-glucose. Therefore, it positively regulates protein reglucosylation by clearing UDP from the ER lumen and by promoting the regeneration of UDP-glucose. Protein reglucosylation is essential to proper glycoprotein folding and quality control in the ER. This Homo sapiens (Human) protein is Nucleoside diphosphate phosphatase ENTPD5.